A 563-amino-acid polypeptide reads, in one-letter code: Merozoite receptor PK66 (563 aa).

A signal peptide spans 1-13 (MNKIYYILFLSAQ). Residues 14–487 (CLVHMGKCER…DGKHKKKMLL (474 aa)) are Extracellular-facing. N-linked (GlcNAc...) asparagine glycosylation is found at N36, N107, N176, N189, N238, and N441. Residues 488 to 508 (IIIGVTGAVCVVAVASLFYFR) traverse the membrane as a helical segment. The Cytoplasmic portion of the chain corresponds to 509–563 (KKAQDDKYDKMDQAEAYGKTANTRKDEMLDPEASFWGEDKRASHTTPVLMEKPYY).

The protein belongs to the apicomplexan parasites AMA1 family.

Its subcellular location is the membrane. Merozoite receptor PK66 is a surface antigen involved in parasite invasion of erythrocytes. This chain is Merozoite receptor PK66 (PK66), found in Plasmodium knowlesi (strain nuri).